The following is a 343-amino-acid chain: Phosphate acyltransferase (343 aa).

This sequence belongs to the PlsX family. Homodimer. Probably interacts with PlsY.

Its subcellular location is the cytoplasm. It catalyses the reaction a fatty acyl-[ACP] + phosphate = an acyl phosphate + holo-[ACP]. The protein operates within lipid metabolism; phospholipid metabolism. Functionally, catalyzes the reversible formation of acyl-phosphate (acyl-PO(4)) from acyl-[acyl-carrier-protein] (acyl-ACP). This enzyme utilizes acyl-ACP as fatty acyl donor, but not acyl-CoA. The polypeptide is Phosphate acyltransferase (Limosilactobacillus reuteri (strain DSM 20016) (Lactobacillus reuteri)).